The following is a 108-amino-acid chain: PTS system fructose-like EIIB component 1 (108 aa).

The region spanning 1-104 (MSKKLIALCA…IIKEIEEMIA (104 aa)) is the PTS EIIB type-2 domain. Catalysis depends on Cys11, which acts as the Phosphocysteine intermediate. Cys11 is subject to Phosphocysteine; by EIIA.

The protein resides in the cytoplasm. The enzyme catalyses D-fructose(out) + N(pros)-phospho-L-histidyl-[protein] = D-fructose 1-phosphate(in) + L-histidyl-[protein]. Its function is as follows. The phosphoenolpyruvate-dependent sugar phosphotransferase system (sugar PTS), a major carbohydrate active transport system, catalyzes the phosphorylation of incoming sugar substrates concomitantly with their translocation across the cell membrane. The enzyme II FryABC PTS system is involved in fructose transport. This chain is PTS system fructose-like EIIB component 1 (fryB), found in Escherichia coli O157:H7.